A 226-amino-acid polypeptide reads, in one-letter code: Urease accessory protein UreF (226 aa).

This sequence belongs to the UreF family. In terms of assembly, ureD, UreF and UreG form a complex that acts as a GTP-hydrolysis-dependent molecular chaperone, activating the urease apoprotein by helping to assemble the nickel containing metallocenter of UreC. The UreE protein probably delivers the nickel.

It localises to the cytoplasm. In terms of biological role, required for maturation of urease via the functional incorporation of the urease nickel metallocenter. The chain is Urease accessory protein UreF from Janthinobacterium sp. (strain Marseille) (Minibacterium massiliensis).